A 639-amino-acid chain; its full sequence is MGKIIGIDLGTTNSCVAVLDGGKARVLENAEGDRTTPSIIAYTDDETIVGQPAKRQAVTNPNNTFFAIKRLIGRRFKDDEVQRDVNIMPFKIIQADNGDAWVESRGNKMAPPQVSAEILKKMKKTAEDFLGEEVTEAVITVPAYFNDSQRQATKDAGRIAGLEVKRIINEPTAAALAYGIDKKQGDNIVAVYDLGGGTFDISIIEIDSNDGDQTFEVLATNGDTHLGGEDFDNRLINYLADEFKKEQGLDLRKDPLAMQRLKEAAEKAKIELSSTNQTEVNLPYITADATGPKHLVVKITRAKLESLVEDLIIRTLEPLKVALADADLSVSDINEVILVGGQTRMPKVQEAVSNFFGKEPRKDVNPDEAVAVGAAIQAGVLSGDVKDVLLLDVTPLSLGIETMGSVMTKLIEKNTTIPTKAQQVFSTADDNQSAVTIHVLQGERKQASANKSLGQFNLDGIEPAPRGMPQIEVMFDIDADGILHVSATDKKTGKKQNITIKASSGLSEEEVAQMVRDAEAHAEEDKKFEELVQSRNQADGLVHATKKQVEEAGDALPADDKAKIEAAMSAVEVATKGNDKEAIEKATQELIEASAKLMEIAQAKAQTQGGAQEGAAKQSNATADDVVDAEFEEVKDDKK.

T198 bears the Phosphothreonine; by autocatalysis mark. The segment covering 603 to 618 (AKAQTQGGAQEGAAKQ) has biased composition (low complexity). The disordered stretch occupies residues 603–639 (AKAQTQGGAQEGAAKQSNATADDVVDAEFEEVKDDKK). Acidic residues predominate over residues 625-639 (DVVDAEFEEVKDDKK).

It belongs to the heat shock protein 70 family.

In terms of biological role, acts as a chaperone. The chain is Chaperone protein DnaK from Shewanella sp. (strain MR-7).